We begin with the raw amino-acid sequence, 279 residues long: Lacto-N-neotetraose biosynthesis glycosyltransferase LgtB (279 aa).

Belongs to the glycosyltransferase 25 family.

Its pathway is glycan metabolism; lacto-N-neotetraose biosynthesis. It functions in the pathway bacterial outer membrane biogenesis; lipooligosaccharide biosynthesis. Adds the second galactose to the lacto-N-tetraose chain in lipooligosaccharide (LOS). The protein is Lacto-N-neotetraose biosynthesis glycosyltransferase LgtB (lgtB) of Neisseria meningitidis serogroup A / serotype 4A (strain DSM 15465 / Z2491).